The chain runs to 121 residues: Large ribosomal subunit protein bL20 (121 aa).

Belongs to the bacterial ribosomal protein bL20 family.

Functionally, binds directly to 23S ribosomal RNA and is necessary for the in vitro assembly process of the 50S ribosomal subunit. It is not involved in the protein synthesizing functions of that subunit. In Petrotoga mobilis (strain DSM 10674 / SJ95), this protein is Large ribosomal subunit protein bL20.